The chain runs to 469 residues: Programmed cell death protein 4 (469 aa).

M1 is subject to N-acetylmethionine. Disordered regions lie at residues 1–38 (MDVE…EIKN) and 58–128 (KAKR…GTPG). S25 is subject to Phosphoserine. Residues 58–64 (KAKRRLR) carry the Nuclear localization signal motif. S67 is subject to Phosphoserine; by PKB and RPS6KB1. Residues S68, S71, S76, S78, S80, and S94 each carry the phosphoserine modification. The Phosphodegron motif lies at 70-76 (DSGRGDS). The segment covering 74–83 (GDSVSDSGSD) has biased composition (low complexity). The segment covering 114-125 (KKGGAGGKGVWG) has biased composition (gly residues). Y152 carries the post-translational modification Phosphotyrosine. The 122-residue stretch at 163–284 (AFEKTLTPII…CNTYIDSYKG (122 aa)) folds into the MI 1 domain. The Nuclear localization signal signature appears at 241–250 (DKLLKDLPEL). Residues S313 and S317 each carry the phosphoserine modification. The MI 2 domain occupies 326–449 (HLVKEIDMLL…SKQLRDLCPS (124 aa)). S457 carries the phosphoserine; by PKB modification.

It belongs to the PDCD4 family. Interacts (via MI domains) with EIF4A2. Interacts (via MI domains) with EIF4A1 (via N-terminal domain). Heterotrimer with EIF4A1; one molecule of PDCD4 binds two molecules of EIF4A1. Interacts with EIF4G1. May form a complex with EIF4A1 and EIF4G1. The interaction between PDCD4 and EIF4A1 interferes with the interaction between EIF4A1 and EIF4G. When phosphorylated, interacts with BTRC and FBXW11. Polyubiquitinated, leading to its proteasomal degradation. Rapidly degraded in response to mitogens. Phosphorylation of the phosphodegron promotes interaction with BTRC and proteasomal degradation. In terms of processing, phosphorylated at Ser-67 by RPS6KB1 in response to mitogens; phosphorylation promotes proteasomal degradation of PDCD4. As to expression, up-regulated in proliferative cells. Highly expressed in epithelial cells of the mammary gland. Reduced expression in lung cancer and colon carcinoma.

It localises to the nucleus. It is found in the cytoplasm. Functionally, inhibits translation initiation and cap-dependent translation. May excert its function by hindering the interaction between EIF4A1 and EIF4G. Inhibits the helicase activity of EIF4A. Modulates the activation of JUN kinase. Down-regulates the expression of MAP4K1, thus inhibiting events important in driving invasion, namely, MAPK85 activation and consequent JUN-dependent transcription. May play a role in apoptosis. Tumor suppressor. Inhibits tumor promoter-induced neoplastic transformation. Binds RNA. The polypeptide is Programmed cell death protein 4 (PDCD4) (Homo sapiens (Human)).